The following is a 588-amino-acid chain: UDP-N-acetylmuramate--L-alanine ligase (588 aa).

119-125 (GSHGKST) contributes to the ATP binding site. A compositionally biased stretch (low complexity) spans 344 to 371 (VPAAAGAAAAPPVRRDPATAAAAATTAP). The disordered stretch occupies residues 344 to 411 (VPAAAGAAAA…APAAGPDHAA (68 aa)). Residues 372–381 (IGPPDSPPPT) show a composition bias toward pro residues. The span at 382–411 (GIALPRAAPPAVDAPVAATPAPAAGPDHAA) shows a compositional bias: low complexity.

It belongs to the MurCDEF family.

Its subcellular location is the cytoplasm. It catalyses the reaction UDP-N-acetyl-alpha-D-muramate + L-alanine + ATP = UDP-N-acetyl-alpha-D-muramoyl-L-alanine + ADP + phosphate + H(+). The protein operates within cell wall biogenesis; peptidoglycan biosynthesis. Cell wall formation. The sequence is that of UDP-N-acetylmuramate--L-alanine ligase from Frankia alni (strain DSM 45986 / CECT 9034 / ACN14a).